We begin with the raw amino-acid sequence, 241 residues long: Carboxy-S-adenosyl-L-methionine synthase (241 aa).

S-adenosyl-L-methionine-binding positions include tyrosine 38, 63–65, 88–89, 116–117, asparagine 131, and arginine 198; these read GCS, DN, and DI.

The protein belongs to the class I-like SAM-binding methyltransferase superfamily. Cx-SAM synthase family. In terms of assembly, homodimer.

The catalysed reaction is prephenate + S-adenosyl-L-methionine = carboxy-S-adenosyl-L-methionine + 3-phenylpyruvate + H2O. In terms of biological role, catalyzes the conversion of S-adenosyl-L-methionine (SAM) to carboxy-S-adenosyl-L-methionine (Cx-SAM). The sequence is that of Carboxy-S-adenosyl-L-methionine synthase from Haemophilus influenzae (strain ATCC 51907 / DSM 11121 / KW20 / Rd).